A 41-amino-acid chain; its full sequence is Large ribosomal subunit protein bL36B (41 aa).

It belongs to the bacterial ribosomal protein bL36 family.

The protein is Large ribosomal subunit protein bL36B of Haemophilus ducreyi (strain 35000HP / ATCC 700724).